Reading from the N-terminus, the 232-residue chain is 7-cyano-7-deazaguanine synthase (232 aa).

Position 7-17 (7-17) interacts with ATP; that stretch reads LSGGLDSTVVT. C195, C206, C209, and C212 together coordinate Zn(2+).

It belongs to the QueC family. It depends on Zn(2+) as a cofactor.

It catalyses the reaction 7-carboxy-7-deazaguanine + NH4(+) + ATP = 7-cyano-7-deazaguanine + ADP + phosphate + H2O + H(+). It participates in purine metabolism; 7-cyano-7-deazaguanine biosynthesis. Its function is as follows. Catalyzes the ATP-dependent conversion of 7-carboxy-7-deazaguanine (CDG) to 7-cyano-7-deazaguanine (preQ(0)). This chain is 7-cyano-7-deazaguanine synthase, found in Methanocaldococcus jannaschii (strain ATCC 43067 / DSM 2661 / JAL-1 / JCM 10045 / NBRC 100440) (Methanococcus jannaschii).